Here is a 446-residue protein sequence, read N- to C-terminus: Probable D-serine dehydratase (446 aa).

An N6-(pyridoxal phosphate)lysine modification is found at lysine 116.

Belongs to the serine/threonine dehydratase family. DsdA subfamily. It depends on pyridoxal 5'-phosphate as a cofactor.

It catalyses the reaction D-serine = pyruvate + NH4(+). The protein is Probable D-serine dehydratase of Bacillus cereus (strain 03BB102).